Reading from the N-terminus, the 366-residue chain is Ribosomal RNA large subunit methyltransferase M (366 aa).

Residues serine 188, 221-224, aspartate 240, aspartate 260, and aspartate 277 contribute to the S-adenosyl-L-methionine site; that span reads CPGG. Residue lysine 306 is the Proton acceptor of the active site.

This sequence belongs to the class I-like SAM-binding methyltransferase superfamily. RNA methyltransferase RlmE family. RlmM subfamily. Monomer.

It is found in the cytoplasm. It carries out the reaction cytidine(2498) in 23S rRNA + S-adenosyl-L-methionine = 2'-O-methylcytidine(2498) in 23S rRNA + S-adenosyl-L-homocysteine + H(+). In terms of biological role, catalyzes the 2'-O-methylation at nucleotide C2498 in 23S rRNA. The polypeptide is Ribosomal RNA large subunit methyltransferase M (Escherichia coli O45:K1 (strain S88 / ExPEC)).